Consider the following 90-residue polypeptide: Putative regulatory protein Dred_1699 (90 aa).

This sequence belongs to the RemA family.

In Desulforamulus reducens (strain ATCC BAA-1160 / DSM 100696 / MI-1) (Desulfotomaculum reducens), this protein is Putative regulatory protein Dred_1699.